We begin with the raw amino-acid sequence, 208 residues long: Large ribosomal subunit protein uL4 (208 aa).

The disordered stretch occupies residues 46 to 84 (QGTHKAKTRAEVRGGGRKPFRQKGTGNARQGSTRSPLMI). The segment covering 69–80 (GTGNARQGSTRS) has biased composition (polar residues).

Belongs to the universal ribosomal protein uL4 family. In terms of assembly, part of the 50S ribosomal subunit.

Functionally, one of the primary rRNA binding proteins, this protein initially binds near the 5'-end of the 23S rRNA. It is important during the early stages of 50S assembly. It makes multiple contacts with different domains of the 23S rRNA in the assembled 50S subunit and ribosome. Forms part of the polypeptide exit tunnel. In Chlorobium limicola (strain DSM 245 / NBRC 103803 / 6330), this protein is Large ribosomal subunit protein uL4.